The sequence spans 286 residues: MPIINYTTFSNVYFTTIVNASLKPLLFEAYKEMVASTPLSTMFSGRSYYTVRDALSSIHLITRSSNYIPLLLPVHAPRLFPMGEYVEFDIYTKKPYERRNKRYTVQIRFNIWLPFGALITTNVPQRLYSLFFPIANLLFSRINVGASLDDMLETQNIPATIGIKSRTNAMVHNVNTVSIIITKIESSTVNSYIYDYILRYQWRFDDMGGNAYNIEICNLQILHAQSCRSNKSLYDLYNDTYREFFHTDKNRYDYFTIFDKCPFTWKLYTPPRTPLCRTVVDTILYL.

This is an uncharacterized protein from Acidianus sp. F28 (AFV-2).